The primary structure comprises 572 residues: Probable inactive glycosyltransferase 25 family member 3 (572 aa).

4 N-linked (GlcNAc...) asparagine glycosylation sites follow: asparagine 52, asparagine 130, asparagine 214, and asparagine 337. The Prevents secretion from ER motif lies at 569-572 (RDEL).

The protein belongs to the glycosyltransferase 25 family.

Its subcellular location is the endoplasmic reticulum lumen. Functionally, probable cell adhesion protein involved in leukocyte transmigration across the blood-brain barrier. Does not express any beta-galactosyltransferase activity in vitro. The chain is Probable inactive glycosyltransferase 25 family member 3 (Cercam) from Rattus norvegicus (Rat).